The primary structure comprises 1968 residues: Signal element on autosome protein 2 (1968 aa).

Positions 72 to 88 are enriched in low complexity; sequence TSSSFSSSLATTTTTSS. Disordered stretches follow at residues 72–252 and 271–364; these read TSSS…TPTQ and QVQQ…VQEQ. The segment covering 107-119 has biased composition (basic residues); the sequence is SHHHPSSSHHHHP. Composition is skewed to low complexity over residues 120 to 134, 144 to 165, 219 to 232, and 298 to 338; these read GQQQ…SHLQ, HPYY…YGQA, DQPS…LPPL, and LSSI…SSSS. Residues 346–362 show a composition bias toward polar residues; it reads PNASSSSLIKRQSQDVQ. Residues 413–440 form a C2H2-type 1 zinc finger; it reads YQCPNCNRNLANARNLQRHRQTCGSAQH. Disordered regions lie at residues 451–499 and 538–601; these read RSPP…LYSP and WSRD…TLDP. Residues 452–467 show a composition bias toward pro residues; it reads SPPPCASAPPVAPPTA. Positions 472–482 are enriched in polar residues; that stretch reads FQHHNSTGNLT. Over residues 483 to 498 the composition is skewed to low complexity; sequence LSYSSSSSRHQSSLYS. The span at 570-594 shows a compositional bias: basic and acidic residues; that stretch reads PLHHLDSFDSADHRKETPRECHEPD. A C2H2-type 2; degenerate zinc finger spans residues 651–672; it reads FTCEACKKSVSSERSLRRHYNT. Disordered regions lie at residues 681–712 and 785–854; these read AASG…GPEK and VTSA…TGNP. The span at 690-702 shows a compositional bias: basic residues; it reads TTKRKPATKRPSK. The segment covering 794–804 has biased composition (low complexity); it reads HQLPHQQPQQQ. Residues 812–824 are compositionally biased toward acidic residues; sequence LLNEQDESADDDG. Over residues 827–851 the composition is skewed to low complexity; that stretch reads RSSSGTVSNSTTTTTTATTTSSKST. The segment at 856–875 adopts a C2H2-type 3; degenerate zinc-finger fold; it reads FTCEHCARQLCSMSNLKRHR. Disordered stretches follow at residues 882-905, 975-1069, 1083-1227, and 1246-1273; these read ASSS…TAPA, GDAL…EHKN, RMDA…SPLD, and PGPL…SQQA. Composition is skewed to low complexity over residues 981–1015, 1023–1046, and 1108–1131; these read QQHQ…AGRI, ILNQ…MLNP, and PQRS…YQVQ. Residues 1136–1146 are compositionally biased toward pro residues; sequence PLPPMQLPPLQ. A compositionally biased stretch (low complexity) spans 1147-1185; that stretch reads NPHNQQQQHQMLHQSQMNYQQVQQVQQVQHVQQQQNLQN. Polar residues-rich tracts occupy residues 1201–1211 and 1251–1273; these read APGNRSRSHSN and QGQS…SQQA. Residues 1274-1297 form a C2H2-type 4 zinc finger; sequence YICPECKKTYASRKNVKRHRMAVH. Disordered regions lie at residues 1333-1478, 1569-1608, 1624-1671, and 1769-1822; these read TPDS…ADEE, SVGL…QQQQ, HPPM…LTCS, and ADRQ…PSTN. A compositionally biased stretch (basic and acidic residues) spans 1388–1403; it reads ERQEPPKKPVADDHKS. Composition is skewed to pro residues over residues 1407–1421 and 1429–1445; these read PLPP…PPPY and LNPP…PPLQ. A compositionally biased stretch (low complexity) spans 1589-1608; sequence QHPQQHPQQHPQQHPQQQQQ. Polar residues predominate over residues 1624–1633; that stretch reads HPPMPVSQQF. The C2H2-type 5; degenerate zinc finger occupies 1668–1694; the sequence is LTCSGCKKILGSDYSLRRHRAGCADVQ. Over residues 1800–1811 the composition is skewed to low complexity; that stretch reads SSSSSSSTSSAS. Residues 1826 to 1858 form a C2H2-type 6 zinc finger; the sequence is HYCQFPECGKNFSSEWNLARHTRESCKMTTRAH.

In terms of tissue distribution, expressed in seam cells, intestine cells, pharyngeal muscles and nerve ring neurons.

It localises to the nucleus. It is found in the cytoplasm. In terms of biological role, RNA-binding protein, which regulates the expression of proteins required to control developmental timing of events during the L2 to L3 larval stage switch. Binds to the 3'UTR of the transcript of the heterochronic protein lin-28 to post-transcriptionally negatively regulate its expression in certain tissue types in the later larval stages. During larval development, controls the timing of seam cell division and terminal differentiation into adult alae. In vitro, it can also bind to DNA through its first zinc finger. May bind directly or indirectly to the promoter of the sex-determining factor xol-1 to activate its transcription. Its activation of xol-1 transcription controls sex determination and X chromosome dosage compensation to promote male development. Through the negative regulation of lin-28 transcript, it also has a role in the fox-1-sex-1-mediated determination of sexual fate. Acts in the intestine to play a role in regulating adult lifespan. This chain is Signal element on autosome protein 2, found in Caenorhabditis elegans.